The chain runs to 421 residues: UDP-N-acetylglucosamine 1-carboxyvinyltransferase (421 aa).

22 to 23 contacts phosphoenolpyruvate; that stretch reads KN. R92 is a binding site for UDP-N-acetyl-alpha-D-glucosamine. C116 acts as the Proton donor in catalysis. C116 carries the 2-(S-cysteinyl)pyruvic acid O-phosphothioketal modification. UDP-N-acetyl-alpha-D-glucosamine is bound by residues D306 and V328.

Belongs to the EPSP synthase family. MurA subfamily.

The protein resides in the cytoplasm. The enzyme catalyses phosphoenolpyruvate + UDP-N-acetyl-alpha-D-glucosamine = UDP-N-acetyl-3-O-(1-carboxyvinyl)-alpha-D-glucosamine + phosphate. It participates in cell wall biogenesis; peptidoglycan biosynthesis. In terms of biological role, cell wall formation. Adds enolpyruvyl to UDP-N-acetylglucosamine. This chain is UDP-N-acetylglucosamine 1-carboxyvinyltransferase, found in Thermotoga maritima (strain ATCC 43589 / DSM 3109 / JCM 10099 / NBRC 100826 / MSB8).